Reading from the N-terminus, the 231-residue chain is ATP-dependent dethiobiotin synthetase BioD (231 aa).

12-17 (EVGKTV) is a binding site for ATP. Thr16 provides a ligand contact to Mg(2+). Residue Lys37 is part of the active site. Ser41 contributes to the substrate binding site. ATP contacts are provided by residues Asp51, 112 to 115 (EGAG), and 202 to 204 (PKL). The Mg(2+) site is built by Asp51 and Glu112.

The protein belongs to the dethiobiotin synthetase family. Homodimer. Mg(2+) serves as cofactor.

The protein localises to the cytoplasm. It carries out the reaction (7R,8S)-7,8-diammoniononanoate + CO2 + ATP = (4R,5S)-dethiobiotin + ADP + phosphate + 3 H(+). Its pathway is cofactor biosynthesis; biotin biosynthesis; biotin from 7,8-diaminononanoate: step 1/2. Functionally, catalyzes a mechanistically unusual reaction, the ATP-dependent insertion of CO2 between the N7 and N8 nitrogen atoms of 7,8-diaminopelargonic acid (DAPA, also called 7,8-diammoniononanoate) to form a ureido ring. This chain is ATP-dependent dethiobiotin synthetase BioD, found in Bacillus subtilis (strain 168).